A 414-amino-acid polypeptide reads, in one-letter code: EARP and GARP complex-interacting protein 1 (414 aa).

Methionine 1 bears the N-acetylmethionine mark. WD repeat units lie at residues 159–199 (TAHG…SQAV), 209–249 (KGQL…QIYC), 253–293 (AHGQ…EPVK), and 297–337 (EHSH…SEPF). The tract at residues 337 to 362 (FGHLVDDDDISDQEDHRSEEKSKEPL) is disordered. Serine 347 carries the phosphoserine modification. Basic and acidic residues predominate over residues 349–362 (QEDHRSEEKSKEPL). The stretch at 372–412 (EHEDSVYAVDWSSADPWLFASLSYDGRLVINRVPRALKYHI) is one WD 5 repeat.

The protein belongs to the WD repeat EIPR1 family. In terms of assembly, interacts with two multisubunit tethering complexes: EARP composed of VPS50, VPS51, VPS52 and VPS53 subunits and GARP complex composed of VPS51, VPS52, VPS53 and VPS54 subunits. Interacts with SNAP29.

It is found in the golgi apparatus. The protein localises to the trans-Golgi network. In terms of biological role, acts as a component of endosomal retrieval machinery that is involved in protein transport from early endosomes to either recycling endosomes or the trans-Golgi network. Mediates the recruitment of Golgi-associated retrograde protein (GARP) complex to the trans-Golgi network and controls early endosome-to-Golgi transport of internalized protein. Promotes the recycling of internalized transferrin receptor (TFRC) to the plasma membrane through interaction with endosome-associated recycling protein (EARP) complex. Controls proper insulin distribution and secretion, and retention of cargo in mature dense core vesicles. Required for the stability of the endosome-associated retrograde protein (EARP) complex subunits and for proper localization and association of EARP with membranes. The polypeptide is EARP and GARP complex-interacting protein 1 (Pongo abelii (Sumatran orangutan)).